The following is a 337-amino-acid chain: Large ribosomal subunit protein uL3 (337 aa).

Residues 1 to 20 (MASIHRPKRGSLAFSPRKRA) are disordered.

The protein belongs to the universal ribosomal protein uL3 family. Part of the 50S ribosomal subunit. Forms a cluster with proteins L14 and L24e.

Its function is as follows. One of the primary rRNA binding proteins, it binds directly near the 3'-end of the 23S rRNA, where it nucleates assembly of the 50S subunit. The sequence is that of Large ribosomal subunit protein uL3 from Methanosarcina barkeri (strain Fusaro / DSM 804).